Consider the following 234-residue polypeptide: Urease accessory protein UreG 1 (234 aa).

Positions 1-29 (MTRTPTGVPMHLGHTHDAPAAVSADATRP) are disordered. Residue 42 to 49 (GPVGSGKT) coordinates GTP.

Belongs to the SIMIBI class G3E GTPase family. UreG subfamily. As to quaternary structure, homodimer. UreD, UreF and UreG form a complex that acts as a GTP-hydrolysis-dependent molecular chaperone, activating the urease apoprotein by helping to assemble the nickel containing metallocenter of UreC. The UreE protein probably delivers the nickel.

The protein resides in the cytoplasm. Its function is as follows. Facilitates the functional incorporation of the urease nickel metallocenter. This process requires GTP hydrolysis, probably effectuated by UreG. The polypeptide is Urease accessory protein UreG 1 (Streptomyces griseus subsp. griseus (strain JCM 4626 / CBS 651.72 / NBRC 13350 / KCC S-0626 / ISP 5235)).